Reading from the N-terminus, the 215-residue chain is Protein LURP-one-related 16 (215 aa).

Residue Gly-2 is the site of N-myristoyl glycine attachment.

Belongs to the LOR family.

Might be related to the phospholipid scramblase and tubby-like superfamily of membrane tethered transcription factors. The protein is Protein LURP-one-related 16 of Arabidopsis thaliana (Mouse-ear cress).